The sequence spans 449 residues: MTELVEHRVCEDRISSLPDDLLVKILLCVPTKDAAATTFLSKRWRFVWRMLPRLNYIETTSDVKSNTVWWFLEESFRFHKAPLLERLWIDLGPQCPINVNPVKWVAKARAPPASNVGPPLLDTRVRWLTFRLLWKGEPIRMPKSFYFCKTLERLTLSDKILVDVPCQVSLPSLRELDLFCVVYKDEDSHVKLLSSCPVLKHLKVTRNRRVEDNVRTFRVEVPSLLRLDYKAGMMFREDSDMSDPFLVTDTPNLLSLHIFDTVGYSLSVWYMPHLVTVVTDELFPSEKFMRPLSSVKYLALSPFDTMVPWCDAVNNYSRLVECMIHLSEYDLLESLLVLLSKCSKLKVFLVDSDIPRWNHDPALWNQPSSIPRCLSSHLEIFEWDGYVGREDEKKIIRYILENSKYLKTAGISPNSTFSGEEKQKMEELESMHRTPTSVLLSSARMSFRY.

Residues glutamate 11–threonine 59 form the F-box domain. LRR repeat units lie at residues threonine 60 to leucine 91, arginine 153 to cysteine 180, valine 182 to arginine 206, phenylalanine 235 to aspartate 260, valine 275 to proline 302, and serine 327 to serine 352. The FBD domain occupies tryptophan 364 to serine 412.

The polypeptide is Putative F-box/FBD/LRR-repeat protein At3g49480 (Arabidopsis thaliana (Mouse-ear cress)).